Consider the following 2532-residue polypeptide: Lovastatin diketide synthase lovF (2532 aa).

Positions 10–430 constitute a Ketosynthase family 3 (KS3) domain; sequence PAPIAMVGMG…GANAHAIVEQ (421 aa). Active-site for beta-ketoacyl synthase activity residues include Cys-183, His-318, and His-353. Residues 545-870 form a malonyl-CoA:ACP transacylase (MAT) domain region; the sequence is VFTGQGAQWF…PYLSCLSRGK (326 aa). Ser-635 functions as the For malonyltransferase activity in the catalytic mechanism. Residues 941–1078 are N-terminal hotdog fold; sequence HDLIGLQEPL…GLVRAEMDQP (138 aa). Positions 941 to 1246 are dehydratase (DH) domain; the sequence is HDLIGLQEPL…LEGLVFQSLG (306 aa). Residues 941 to 1251 enclose the PKS/mFAS DH domain; that stretch reads HDLIGLQEPL…FQSLGASLGT (311 aa). The Proton acceptor; for dehydratase activity role is filled by His-973. The interval 1075–1094 is disordered; it reads MDQPPSSLSNQQRIDPRPWS. Residues 1078-1087 show a composition bias toward polar residues; that stretch reads PPSSLSNQQR. Residues 1092 to 1251 are C-terminal hotdog fold; that stretch reads PWSRKTAPQE…FQSLGASLGT (160 aa). Residue Asp-1159 is the Proton donor; for dehydratase activity of the active site. A methyltransferase (CMet) domain region spans residues 1423-1607; sequence ELVRLCCHKN…ARDCDSHEFY (185 aa). The interval 1825-2144 is enoylreductase (ER) domain; the sequence is GLLDSLHFTK…SGQHVGKIVV (320 aa). The interval 2168-2340 is ketoreductase (KR) domain; that stretch reads SYLVAGGLGG…AVTIDLGMVQ (173 aa). One can recognise a Carrier domain in the interval 2453–2530; that stretch reads ESIAVIMEAM…KVAEVVLQRY (78 aa). Position 2490 is an O-(pantetheine 4'-phosphoryl)serine (Ser-2490).

In terms of assembly, interacts with LovD. Requires pantetheine 4'-phosphate as cofactor.

It carries out the reaction holo-[2-methylbutanoate polyketide synthase] + 2 malonyl-CoA + S-adenosyl-L-methionine + 2 NADPH + 3 H(+) = (S)-2-methylbutanoyl-[2-methylbutanoate polyketide synthase] + S-adenosyl-L-homocysteine + 2 CO2 + 2 NADP(+) + 2 CoA + H2O. The protein operates within polyketide biosynthesis; lovastatin biosynthesis. Lovastatin diketide synthase; part of the gene cluster that mediates the biosynthesis of lovastatin (also known as mevinolin, mevacor or monacolin K), a hypolipidemic inhibitor of (3S)-hydroxymethylglutaryl-coenzyme A (HMG-CoA) reductase (HMGR). The first step in the biosynthesis of lovastatin is the production of dihydromonacolin L acid by the lovastatin nonaketide synthase lovB and the trans-acting enoyl reductase lovC via condensation of one acetyl-CoA unit and 8 malonyl-CoA units. Dihydromonacolin L acid is released from lovB by the thioesterase lovG. Next, dihydromonacolin L acid is oxidized by the dihydromonacolin L monooxygenase lovA twice to form monacolin J acid. The 2-methylbutyrate moiety of lovastatin is synthesized by the lovastatin diketide synthase lovF via condensation of one acetyl-CoA unit and one malonyl-CoA unit. Finally, the covalent attachment of this moiety to monacolin J acid is catalyzed by the transesterase lovD to yield lovastatin. LovD has broad substrate specificity and can also convert monacolin J to simvastatin using alpha-dimethylbutanoyl-S-methyl-3-mercaptopropionate (DMB-S-MMP) as the thioester acyl donor, and can also catalyze the reverse reaction and function as hydrolase in vitro. LovD has much higher activity with LovF-bound 2-methylbutanoate than with free diketide substrates. The chain is Lovastatin diketide synthase lovF from Aspergillus terreus.